The sequence spans 350 residues: Enoyl-[acyl-carrier-protein] reductase, mitochondrial (350 aa).

The N-terminal 14 residues, 1–14 (MNSTRNIISLVRRY), are a transit peptide targeting the mitochondrion. The active-site Proton donor is the Y69. Residues N143, 169–172 (NSMV), 192–194 (RDG), 261–264 (YGGM), 286–288 (FWL), and K343 contribute to the NADP(+) site.

This sequence belongs to the zinc-containing alcohol dehydrogenase family. Quinone oxidoreductase subfamily. In terms of assembly, homodimer.

The protein localises to the mitochondrion. The catalysed reaction is a 2,3-saturated acyl-[ACP] + NADP(+) = a (2E)-enoyl-[ACP] + NADPH + H(+). Catalyzes the NADPH-dependent reduction of trans-2-enoyl thioesters in mitochondrial fatty acid synthesis (fatty acid synthesis type II). Fatty acid chain elongation in mitochondria uses acyl carrier protein (ACP) as an acyl group carrier, but the enzyme accepts both ACP and CoA thioesters as substrates in vitro. This is Enoyl-[acyl-carrier-protein] reductase, mitochondrial (mecr) from Dictyostelium discoideum (Social amoeba).